The primary structure comprises 77 residues: Apelin (77 aa).

A signal peptide spans 1 to 22 (MNLRRCVQALLLLWLCLSAVCG). The propeptide occupies 23 to 41 (GPLLQTSDGKEMEEGTIRY). A disordered region spans residues 43 to 77 (VQPRGPRSGPGPWQGGRRKFRRQRPRLSHKGPMPF). Residues 58 to 71 (GRRKFRRQRPRLSH) are compositionally biased toward basic residues. Q65 carries the post-translational modification Pyrrolidone carboxylic acid.

The protein belongs to the apelin family. Post-translationally, at least 5 active peptides may be produced by proteolytic processing of the peptide precursor.

The protein localises to the secreted. The protein resides in the extracellular space. Peptide hormone that functions as endogenous ligand for the G-protein-coupled apelin receptor (APLNR/APJ), that plays a role in cadiovascular homeostasis. Functions as a balanced agonist activating both G(i) protein pathway and beta-arrestin pathway of APLNR. Downstream G proteins activation, apelin can inhibit cAMP production and activate key intracellular effectors such as ERKs. On the other hand, APLNR activation induces beta-arrestin recruitment to the membrane leading to desensitization and internalization of the receptor. Apelin blunts cardiac hypertrophic induction from APLNR on response to pathological stimuli, but also induces myocardial hypertrophy under normal conditions. Apelin-36 dissociates more hardly than (pyroglu)apelin-13 from APLNR. Involved in the regulation of cardiac precursor cell movements during gastrulation and heart morphogenesis. Has an inhibitory effect on cytokine production in response to T-cell receptor/CD3 cross-linking; the oral intake of apelin in the colostrum and the milk might therefore modulate immune responses in neonates. Plays a role in early coronary blood vessels formation. Mediates myocardial contractility in an ERK1/2-dependent manner. May also have a role in the central control of body fluid homeostasis by influencing vasopressin release and drinking behavior. The chain is Apelin (APLN) from Bos taurus (Bovine).